A 135-amino-acid polypeptide reads, in one-letter code: Probable transporter PD_1892 (135 aa).

Helical transmembrane passes span 4 to 24 (YWYP…LLLL), 45 to 65 (AQNI…TVIF), 71 to 91 (VTVA…GLGT), and 114 to 134 (IVAT…MGVY).

The protein belongs to the TsuA/YedE (TC 9.B.102) family.

The protein resides in the cell inner membrane. The polypeptide is Probable transporter PD_1892 (Xylella fastidiosa (strain Temecula1 / ATCC 700964)).